The chain runs to 316 residues: Transaldolase (316 aa).

Lysine 131 (schiff-base intermediate with substrate) is an active-site residue.

Belongs to the transaldolase family. Type 1 subfamily. Homodimer.

The protein resides in the cytoplasm. The enzyme catalyses D-sedoheptulose 7-phosphate + D-glyceraldehyde 3-phosphate = D-erythrose 4-phosphate + beta-D-fructose 6-phosphate. The protein operates within carbohydrate degradation; pentose phosphate pathway; D-glyceraldehyde 3-phosphate and beta-D-fructose 6-phosphate from D-ribose 5-phosphate and D-xylulose 5-phosphate (non-oxidative stage): step 2/3. Transaldolase is important for the balance of metabolites in the pentose-phosphate pathway. This chain is Transaldolase, found in Buchnera aphidicola subsp. Baizongia pistaciae (strain Bp).